The sequence spans 1492 residues: Condensin-2 complex subunit D3-L (1492 aa).

A disordered region spans residues 152-201 (WPRDPNASRKRKKDTLKSSQGDNRGGRKRPRPPRRDEQEMEDLSEEEQDE). Over residues 189–201 (QEMEDLSEEEQDE) the composition is skewed to acidic residues. HEAT repeat units lie at residues 543 to 581 (SSDG…CHLI), 583 to 619 (CSSE…AQPH), and 621 to 659 (VLIQ…QSIT). Disordered regions lie at residues 1269 to 1345 (QLER…PRPR), 1359 to 1406 (RKAA…SLVG), and 1454 to 1492 (IMSP…KPSN). Positions 1277-1290 (NVQNPPSAESTGSP) are enriched in polar residues. Residues 1377–1388 (PSTPSPARTTSS) show a composition bias toward low complexity.

Component of the condensin-2 complex, which contains the smc2 and smc4 heterodimer, and three non SMC subunits, ncapg2, ncaph2 and ncapd3 that probably regulate the complex.

Its subcellular location is the nucleus. Its function is as follows. Regulatory subunit of the condensin-2 complex, a complex which establishes mitotic chromosome architecture and is involved in physical rigidity of the chromatid axis. This Xenopus laevis (African clawed frog) protein is Condensin-2 complex subunit D3-L.